The following is a 501-amino-acid chain: Pyruvate kinase (501 aa).

R50 contributes to the substrate binding site. Residues N52, S54, D85, and T86 each contribute to the K(+) site. 52-55 (NFSH) provides a ligand contact to ATP. The ATP site is built by R92 and K178. E243 contributes to the Mg(2+) binding site. G266, D267, and T299 together coordinate substrate. Residue D267 participates in Mg(2+) binding.

This sequence belongs to the pyruvate kinase family. In terms of assembly, homotetramer. Requires Mg(2+) as cofactor. K(+) is required as a cofactor.

It catalyses the reaction pyruvate + ATP = phosphoenolpyruvate + ADP + H(+). It functions in the pathway carbohydrate degradation; glycolysis; pyruvate from D-glyceraldehyde 3-phosphate: step 5/5. The protein is Pyruvate kinase (PYK1) of Naumovozyma castellii (Yeast).